A 403-amino-acid polypeptide reads, in one-letter code: MSTFNRIHLVVLDSVGIGAAPDANNFSNAGVPDGASDTLGHISKTVGLNVPNMAKIGLGNIPRDTPLKTVPAENHPTGYVTKLEEVSLGKDTMTGHWEIMGLNITEPFDTFWNGFPEEIISKIEKFSGRKVIREANKPYSGTAVIDDFGPRQMETGELIIYTSADPVLQIAAHEDVIPLDELYRICEYARSITLERPALLGRIIARPYVGKPRNFTRTANRHDYALSPFAPTVLNKLADAGVSTYAVGKINDIFNGSGITNDMGHNKSNSHGVDTLIKTMGLSAFTKGFSFTNLVDFDALYGHRRNAHGYRDCLHEFDERLPEIIAAMKVDDLLLITADHGNDPTYAGTDHTREYVPLLAYSPSFTGNGVLPVGHYADISATIADNFGVDTAMIGESFLDKLI.

The Mn(2+) site is built by aspartate 13, aspartate 298, histidine 303, aspartate 339, histidine 340, and histidine 351.

It belongs to the phosphopentomutase family. Mn(2+) serves as cofactor.

Its subcellular location is the cytoplasm. It carries out the reaction 2-deoxy-alpha-D-ribose 1-phosphate = 2-deoxy-D-ribose 5-phosphate. The enzyme catalyses alpha-D-ribose 1-phosphate = D-ribose 5-phosphate. It participates in carbohydrate degradation; 2-deoxy-D-ribose 1-phosphate degradation; D-glyceraldehyde 3-phosphate and acetaldehyde from 2-deoxy-alpha-D-ribose 1-phosphate: step 1/2. In terms of biological role, isomerase that catalyzes the conversion of deoxy-ribose 1-phosphate (dRib-1-P) and ribose 1-phosphate (Rib-1-P) to deoxy-ribose 5-phosphate (dRib-5-P) and ribose 5-phosphate (Rib-5-P), respectively. The sequence is that of Phosphopentomutase from Streptococcus mutans serotype c (strain ATCC 700610 / UA159).